Here is a 262-residue protein sequence, read N- to C-terminus: Phosphatidylserine decarboxylase proenzyme (262 aa).

Active-site charge relay system; for autoendoproteolytic cleavage activity residues include Asp-86, His-142, and Ser-226. The Schiff-base intermediate with substrate; via pyruvic acid; for decarboxylase activity role is filled by Ser-226. Ser-226 is subject to Pyruvic acid (Ser); by autocatalysis.

The protein belongs to the phosphatidylserine decarboxylase family. PSD-B subfamily. Prokaryotic type I sub-subfamily. In terms of assembly, heterodimer of a large membrane-associated beta subunit and a small pyruvoyl-containing alpha subunit. Pyruvate is required as a cofactor. Is synthesized initially as an inactive proenzyme. Formation of the active enzyme involves a self-maturation process in which the active site pyruvoyl group is generated from an internal serine residue via an autocatalytic post-translational modification. Two non-identical subunits are generated from the proenzyme in this reaction, and the pyruvate is formed at the N-terminus of the alpha chain, which is derived from the carboxyl end of the proenzyme. The autoendoproteolytic cleavage occurs by a canonical serine protease mechanism, in which the side chain hydroxyl group of the serine supplies its oxygen atom to form the C-terminus of the beta chain, while the remainder of the serine residue undergoes an oxidative deamination to produce ammonia and the pyruvoyl prosthetic group on the alpha chain. During this reaction, the Ser that is part of the protease active site of the proenzyme becomes the pyruvoyl prosthetic group, which constitutes an essential element of the active site of the mature decarboxylase.

The protein resides in the cell membrane. The enzyme catalyses a 1,2-diacyl-sn-glycero-3-phospho-L-serine + H(+) = a 1,2-diacyl-sn-glycero-3-phosphoethanolamine + CO2. The protein operates within phospholipid metabolism; phosphatidylethanolamine biosynthesis; phosphatidylethanolamine from CDP-diacylglycerol: step 2/2. Functionally, catalyzes the formation of phosphatidylethanolamine (PtdEtn) from phosphatidylserine (PtdSer). The polypeptide is Phosphatidylserine decarboxylase proenzyme (Bacillus thuringiensis (strain Al Hakam)).